Consider the following 485-residue polypeptide: D-alanine--D-alanyl carrier protein ligase (485 aa).

144–145 (TS) is an ATP binding site. Asp189 lines the D-alanine pocket. 284–289 (NTYGPT) lines the ATP pocket. Val293 contributes to the D-alanine binding site. Residues Asp365 and Lys473 each contribute to the ATP site. Residue Lys473 coordinates D-alanine.

The protein belongs to the ATP-dependent AMP-binding enzyme family. DltA subfamily.

It is found in the cytoplasm. The enzyme catalyses holo-[D-alanyl-carrier protein] + D-alanine + ATP = D-alanyl-[D-alanyl-carrier protein] + AMP + diphosphate. It participates in cell wall biogenesis; lipoteichoic acid biosynthesis. Catalyzes the first step in the D-alanylation of lipoteichoic acid (LTA), the activation of D-alanine and its transfer onto the D-alanyl carrier protein (Dcp) DltC. In an ATP-dependent two-step reaction, forms a high energy D-alanyl-AMP intermediate, followed by transfer of the D-alanyl residue as a thiol ester to the phosphopantheinyl prosthetic group of the Dcp. D-alanylation of LTA plays an important role in modulating the properties of the cell wall in Gram-positive bacteria, influencing the net charge of the cell wall. This is D-alanine--D-alanyl carrier protein ligase from Staphylococcus aureus (strain MRSA252).